The chain runs to 247 residues: tRNA pseudouridine synthase A (247 aa).

Asp53 (nucleophile) is an active-site residue. Tyr112 is a binding site for substrate.

The protein belongs to the tRNA pseudouridine synthase TruA family. As to quaternary structure, homodimer.

The enzyme catalyses uridine(38/39/40) in tRNA = pseudouridine(38/39/40) in tRNA. Formation of pseudouridine at positions 38, 39 and 40 in the anticodon stem and loop of transfer RNAs. This Anaplasma marginale (strain St. Maries) protein is tRNA pseudouridine synthase A.